The chain runs to 660 residues: MDALVAHCSARLLQQEKEIKFLTAEVDRLKNYSCSEASADLEKLREENLKLKYRLNILRKSLQAERNKPTKTMININSCLEEVFGCAIKAAYPVLENPPLIVTPSQQPKFGDYQCNSAMGICQMLKTKEQKVNPREIAENIVKHLPDNEYIEKVEIAGPGFINIHLRKGFVSQQLTNLLVNGVKIPSIGENKKVIVDFSSPNIAKEMHVGHLRSTIIGESMCRLFEFAGYNVLRLNHVGDWGTQFGMLIAHLQDKFPDYLTVSPPIGDLQAFYKESKKRFDTEEEFKKRAYQCVVLLQSKNPDIIKAWKLICDVSRQEFNKIYEALDISLIERGESFYQDRMHDIVKEFEDRGFVQVDDGRKIVFVPGCSVPLTIVKSDGGYTYDTSDLAAIKQRLFEEKADMIIYVVDNGQSLHFQTVFGAAQMIGWYDPAVTRVSHAGFGVVLGEDKKKFKTRSGETVRLIDLLEEGLKRSMDKLKEKERDKVLTTEELKAAQTSVAYGCIKYADLSHNRLNDYIFSFDKMLDDRGNTAAYLLYAFTRIRSIARLANIDEEMLRKAAHETEIILDHEKEWKLGRCILRFPEVLQKILDDLLLHTLCDYIYELATTFTEFYDSCYCVEKDRQSGEVLKVNMWRMLLCEAVAAVMAKGFDILGIKPVQRM.

An N-acetylmethionine modification is found at methionine 1. Positions 1–72 (MDALVAHCSA…QAERNKPTKT (72 aa)) are could be involved in the assembly of the multisynthetase complex. L-arginine contacts are provided by residues 200–202 (SPN), histidine 211, tyrosine 384, aspartate 388, and glutamine 412. A 'HIGH' region motif is present at residues 201 to 212 (PNIAKEMHVGHL). The interaction with tRNA stretch occupies residues 529–543 (NTAAYLLYAFTRIRS).

Belongs to the class-I aminoacyl-tRNA synthetase family. Interacts (via N-terminus) with AIMP1 (via N-terminus); this stimulates its catalytic activity. Interacts (via N-terminus) with LARS2 (via C-terminus). Monomer. Part of a multisubunit complex that groups tRNA ligases for Arg (RARS1), Asp (DARS1), Gln (QARS1), Ile (IARS1), Leu (LARS1), Lys (KARS1), Met (MARS1) the bifunctional ligase for Glu and Pro (EPRS1) and the auxiliary subunits AIMP1/p43, AIMP2/p38 and EEF1E1/p18. Interacts with QARS1. Part of a complex composed of RARS1, QARS1 and AIMP1.

It is found in the cytoplasm. The protein localises to the cytosol. The enzyme catalyses tRNA(Arg) + L-arginine + ATP = L-arginyl-tRNA(Arg) + AMP + diphosphate. Functionally, forms part of a macromolecular complex that catalyzes the attachment of specific amino acids to cognate tRNAs during protein synthesis. Modulates the secretion of AIMP1 and may be involved in generation of the inflammatory cytokine EMAP2 from AIMP1. The polypeptide is Arginine--tRNA ligase, cytoplasmic (RARS1) (Bos taurus (Bovine)).